A 180-amino-acid chain; its full sequence is Probable RNA 2'-phosphotransferase (180 aa).

It belongs to the KptA/TPT1 family.

Its function is as follows. Removes the 2'-phosphate from RNA via an intermediate in which the phosphate is ADP-ribosylated by NAD followed by a presumed transesterification to release the RNA and generate ADP-ribose 1''-2''-cyclic phosphate (APPR&gt;P). May function as an ADP-ribosylase. This Thermococcus kodakarensis (strain ATCC BAA-918 / JCM 12380 / KOD1) (Pyrococcus kodakaraensis (strain KOD1)) protein is Probable RNA 2'-phosphotransferase.